Consider the following 1214-residue polypeptide: Brassinosteroid LRR receptor kinase BRL3 (1214 aa).

The first 29 residues, 1–29 (MAAVRVVAPAPSVLLLVAAAVVLLHLARA), serve as a signal peptide directing secretion. Asn61 carries an N-linked (GlcNAc...) asparagine glycan. A Cys pair 1 motif is present at residues 69 to 76 (CAWAGVSC). 22 LRR repeats span residues 103 to 127 (LSALRRLDLRGNAFHGDLSRHGSPR), 131 to 155 (PCALVEVDISSNTFNGTLPRAFLAS), 156 to 177 (CGGLQTLNLSRNSLTGGGYPFP), 178 to 202 (PSLRRLDMSRNQLSDAGLLNYSLTG), 204 to 228 (HGIQYLNLSANQFTGSLPGLAPCTE), 230 to 250 (SVLDLSWNLMSGVLPPRFVAM), 252 to 276 (PANLTYLSIAGNNFSMDISDYEFGG), 277 to 302 (CANLTLLDWSYNRLRSTGLPRSLVDC), 303 to 325 (RRLEALDMSGNKLLSGPIPTFLV), 327 to 351 (LQALRRLSLAGNRFTGEISDKLSIL), 353 to 375 (KTLVELDLSSNQLIGSLPASFGQ), 377 to 400 (RFLQVLDLGNNQLSGDFVETVITN), 401 to 427 (ISSLRVLRLPFNNITGANPLPALASRC), 429 to 451 (LLEVIDLGSNEFDGEIMPDLCSS), 452 to 476 (LPSLRKLLLPNNYINGTVPSSLSNC), 478 to 500 (NLESIDLSFNLLVGQIPPEILFL), 502 to 525 (KLVDLVLWANNLSGEIPDKFCFNS), 526 to 549 (TALETLVISYNSFTGNIPESITRC), 550 to 572 (VNLIWLSLAGNNLTGSIPSGFGN), 573 to 597 (LQNLAILQLNKNSLSGKVPAELGSC), 599 to 621 (NLIWLDLNSNELTGTIPPQLAAQ), and 650 to 673 (GVLFEFLDIRPDRLANFPAVHLCS). N-linked (GlcNAc...) asparagine glycans are attached at residues Asn145, Asn163, Asn197, and Asn210. N-linked (GlcNAc...) asparagine glycans are attached at residues Asn254, Asn264, and Asn279. N-linked (GlcNAc...) asparagine glycans are attached at residues Asn400 and Asn413. The N-linked (GlcNAc...) asparagine glycan is linked to Asn466. 2 N-linked (GlcNAc...) asparagine glycosylation sites follow: Asn512 and Asn524. Asn561 is a glycosylation site (N-linked (GlcNAc...) asparagine). Tyr678 is a brassinolide binding site. 4 LRR repeats span residues 689-712 (NGSMIFLDLSYNSLTGTIPASFGN), 713-736 (MTYLEVLNLGHNELTGAIPDAFTG), 738-760 (KGIGALDLSHNHLTGVIPPGFGC), and 762-786 (HFLADFDVSNNNLTGEIPTSGQLIT). The short motif at 799 to 806 (CGIPLNPC) is the Cys pair 2 element. A helical transmembrane segment spans residues 829-849 (SVFLAVTLSVLILFSLLIIHY). The Protein kinase domain occupies 913-1196 (FCAETLIGSG…FQVDSGSNFL (284 aa)). Residues 919–927 (IGSGGFGEV), Lys941, 987–989 (EYM), 993–996 (SLDF), 1039–1044 (DMKSSN), and Asp1057 contribute to the ATP site. Asp1039 serves as the catalytic Proton acceptor.

This sequence belongs to the protein kinase superfamily. Ser/Thr protein kinase family. As to expression, highly expressed in roots. Expressed at low levels in shoots.

Its subcellular location is the cell membrane. The catalysed reaction is L-seryl-[protein] + ATP = O-phospho-L-seryl-[protein] + ADP + H(+). It catalyses the reaction L-threonyl-[protein] + ATP = O-phospho-L-threonyl-[protein] + ADP + H(+). In terms of biological role, may be involved in brassenosteroid (BR) perception in roots. This Oryza sativa subsp. japonica (Rice) protein is Brassinosteroid LRR receptor kinase BRL3.